Consider the following 563-residue polypeptide: Eukaryotic translation initiation factor 3 subunit D-1 (563 aa).

The tract at residues Val-98–Ser-167 is disordered. Residues Lys-100–Asn-121 show a composition bias toward basic residues. Position 128 is a phosphothreonine (Thr-128). An RNA gate region spans residues Glu-291–Pro-305.

It belongs to the eIF-3 subunit D family. As to quaternary structure, component of the eukaryotic translation initiation factor 3 (eIF-3) complex. The eIF-3 complex interacts with pix.

It localises to the cytoplasm. MRNA cap-binding component of the eukaryotic translation initiation factor 3 (eIF-3) complex, which is involved in protein synthesis of a specialized repertoire of mRNAs and, together with other initiation factors, stimulates binding of mRNA and methionyl-tRNAi to the 40S ribosome. The eIF-3 complex specifically targets and initiates translation of a subset of mRNAs involved in cell proliferation. In the eIF-3 complex, eif3d specifically recognizes and binds the 7-methylguanosine cap of a subset of mRNAs. This chain is Eukaryotic translation initiation factor 3 subunit D-1, found in Drosophila mojavensis (Fruit fly).